Consider the following 655-residue polypeptide: ATP-dependent zinc metalloprotease FtsH (655 aa).

Topologically, residues 1–17 (MPIETEPNRTRKNFEPK) are cytoplasmic. A helical transmembrane segment spans residues 18–38 (RFGGSLFILFTLLLFLNLFVL). Residues 39–124 (RGPRFPITAY…APPPSSLSWL (86 aa)) are Lumenal-facing. A helical membrane pass occupies residues 125 to 145 (PTLLGWVVPPLIFFGIWSWLI). The Cytoplasmic portion of the chain corresponds to 146-655 (NRNQGAGPAA…LNSHQLIGIN (510 aa)). 216–223 (GPPGTGKT) is an ATP binding site. Histidine 440 is a Zn(2+) binding site. Glutamate 441 is a catalytic residue. Zn(2+) contacts are provided by histidine 444 and aspartate 517.

This sequence in the central section; belongs to the AAA ATPase family. In the C-terminal section; belongs to the peptidase M41 family. In terms of assembly, homohexamer. Zn(2+) is required as a cofactor.

The protein resides in the cellular thylakoid membrane. Acts as a processive, ATP-dependent zinc metallopeptidase for both cytoplasmic and membrane proteins. Plays a role in the quality control of integral membrane proteins. In Acaryochloris marina (strain MBIC 11017), this protein is ATP-dependent zinc metalloprotease FtsH.